Here is a 414-residue protein sequence, read N- to C-terminus: MDEKQPLTPEQQKLVDEQVEALMRGVVEVVPKEAFREKIEKSVRTGKPLNIKLGMDPSAPDVHIGHTVVLQKLRQFQEYGHHIQLLIGDFTGKIGDPTGKSETRKVLTDEQVKQNAQTYVEQYGKILDIEKTEILYNSRWLSELKFDDVLKLAGQMTVARMLEREDFSKRYKTGQPISVHEFFYPLMQGYDSVAMETDIEVGGTDQTFNLLMGRQLQEAYGKEKQVMLTLPLIEGLDGVRKMSKSLNNYIGIDEAPNEIFGKAMSIPDELMVKYYKLATDVPMDEIEALEKGLADGSVHPRDAKMRLGHKFVEMYHGKEAADEAEQYFKTVFQKRALPEDIPVFSWEGDKEVPLIDLLVTLNMQSSKGEARRMIQGGGVKINEQKITDIHTVVSVEDNMIVQVGKRKFAKLSLT.

The short motif at proline 57 to histidine 66 is the 'HIGH' region element. The 'KMSKS' region signature appears at lysine 241 to serine 245. ATP is bound at residue lysine 244. Positions valine 352–leucine 413 constitute an S4 RNA-binding domain.

It belongs to the class-I aminoacyl-tRNA synthetase family. TyrS type 2 subfamily. Homodimer.

It localises to the cytoplasm. The enzyme catalyses tRNA(Tyr) + L-tyrosine + ATP = L-tyrosyl-tRNA(Tyr) + AMP + diphosphate + H(+). Catalyzes the attachment of tyrosine to tRNA(Tyr) in a two-step reaction: tyrosine is first activated by ATP to form Tyr-AMP and then transferred to the acceptor end of tRNA(Tyr). In Shouchella clausii (strain KSM-K16) (Alkalihalobacillus clausii), this protein is Tyrosine--tRNA ligase.